Reading from the N-terminus, the 344-residue chain is Phenylalanine--tRNA ligase alpha subunit (344 aa).

Glu257 contributes to the Mg(2+) binding site.

This sequence belongs to the class-II aminoacyl-tRNA synthetase family. Phe-tRNA synthetase alpha subunit type 1 subfamily. As to quaternary structure, tetramer of two alpha and two beta subunits. It depends on Mg(2+) as a cofactor.

The protein resides in the cytoplasm. The enzyme catalyses tRNA(Phe) + L-phenylalanine + ATP = L-phenylalanyl-tRNA(Phe) + AMP + diphosphate + H(+). This Chlorobium chlorochromatii (strain CaD3) protein is Phenylalanine--tRNA ligase alpha subunit.